A 323-amino-acid polypeptide reads, in one-letter code: CYFIP-related Rac1 interactor A (323 aa).

The protein belongs to the CYRI family.

The protein resides in the membrane. Its function is as follows. May negatively regulate RAC1 signaling and RAC1-driven cytoskeletal remodeling. May regulate chemotaxis, cell migration and epithelial polarization by controlling the polarity, plasticity, duration and extent of protrusions. The sequence is that of CYFIP-related Rac1 interactor A (CYRIA) from Gallus gallus (Chicken).